The following is a 344-amino-acid chain: Envelope glycoprotein M (344 aa).

Topologically, residues 1–12 are intravirion; it reads MASSRVDTINLR. Residues 13 to 33 form a helical membrane-spanning segment; that stretch reads IWLVSIICAALSFINVTVYLI. Residues 34-76 are Virion surface-facing; the sequence is AINFPNLGFPCAYFEINDLKAVNLSANNQIYQMTHQLYINPVQ. The helical transmembrane segment at 77-97 threads the bilayer; it reads IICYVLIMAMLFLLIIIYYIV. At 98–125 the chain is on the intravirion side; sequence CCAKVFSSNKTSNVNQTTRDITWMGDTS. The helical transmembrane segment at 126-146 threads the bilayer; it reads SCFQFILIMDTFQLFVTALSF. Residue Arg-147 is a topological domain, virion surface. A helical membrane pass occupies residues 148-168; it reads LVALGAFAYCIFFVCFTTFNV. At 169–203 the chain is on the intravirion side; the sequence is TLITQFQSADKSFFAFQKIHPNLKGTVQFKTVVIN. The chain crosses the membrane as a helical span at residues 204–224; sequence LTELMLGYSTMFLGITTCLGV. At 225–238 the chain is on the virion surface side; the sequence is GNSIYIRSITVAYS. Residues 239-259 form a helical membrane-spanning segment; that stretch reads SINTFLVMACIYSIVIEAVLV. Residues 260–263 lie on the Intravirion side of the membrane; sequence RYVK. A helical transmembrane segment spans residues 264–284; the sequence is PLFGYYVGMFCGAVGLSFPIL. Over 285 to 293 the chain is Virion surface; sequence QYETFFESE. The chain crosses the membrane as a helical span at residues 294–314; sequence WSTGLIINLAVIAIISIGFII. The Intravirion segment spans residues 315–344; that stretch reads CRLVRYLVKKKRRYKQLVNTESSSLMDENE.

It belongs to the herpesviridae glycoprotein M family. In terms of assembly, interacts (via N-terminus) with gN (via N-terminus). The gM-gN heterodimer forms the gCII complex.

The protein resides in the virion membrane. It localises to the host Golgi apparatus. It is found in the host trans-Golgi network. Its subcellular location is the host endosome membrane. The protein localises to the host nucleus inner membrane. In terms of biological role, envelope glycoprotein important for virion assembly and egress. Plays a role in the correct incorporation of gH-gL into virion membrane. Directs the glycoprotein N (gN) to the host trans-Golgi network. The chain is Envelope glycoprotein M from Homo sapiens (Human).